Here is a 210-residue protein sequence, read N- to C-terminus: Probable transcriptional regulator ycf29 (210 aa).

The Response regulatory domain occupies 3-119 (NILILDTDIG…ELVVIIEGVL (117 aa)). Asp52 is subject to 4-aspartylphosphate. Residues 142 to 207 (SNNLKINFTP…ELVKYALENN (66 aa)) enclose the HTH luxR-type domain.

Its subcellular location is the plastid. The protein localises to the cyanelle. The protein is Probable transcriptional regulator ycf29 (ycf29) of Cyanophora paradoxa.